Reading from the N-terminus, the 208-residue chain is Pyridoxine/pyridoxamine 5'-phosphate oxidase (208 aa).

Residues 55-60 (RMVLLK), 70-71 (YT), Lys-76, Lys-77, and Gln-99 each bind FMN. Position 60 (Lys-60) interacts with substrate. The substrate site is built by Tyr-117, Arg-121, and Ser-125. FMN-binding positions include 134–135 (QS) and Trp-179. 185-187 (RLH) serves as a coordination point for substrate. Arg-189 contacts FMN.

Belongs to the pyridoxamine 5'-phosphate oxidase family. As to quaternary structure, homodimer. The cofactor is FMN.

It carries out the reaction pyridoxamine 5'-phosphate + O2 + H2O = pyridoxal 5'-phosphate + H2O2 + NH4(+). It catalyses the reaction pyridoxine 5'-phosphate + O2 = pyridoxal 5'-phosphate + H2O2. The protein operates within cofactor metabolism; pyridoxal 5'-phosphate salvage; pyridoxal 5'-phosphate from pyridoxamine 5'-phosphate: step 1/1. It participates in cofactor metabolism; pyridoxal 5'-phosphate salvage; pyridoxal 5'-phosphate from pyridoxine 5'-phosphate: step 1/1. Functionally, catalyzes the oxidation of either pyridoxine 5'-phosphate (PNP) or pyridoxamine 5'-phosphate (PMP) into pyridoxal 5'-phosphate (PLP). The protein is Pyridoxine/pyridoxamine 5'-phosphate oxidase of Brucella abortus biovar 1 (strain 9-941).